The primary structure comprises 137 residues: Large-conductance mechanosensitive channel (137 aa).

2 helical membrane passes run 10 to 30 (FAMRGNVVDLAVGVIIGAAFG) and 76 to 96 (GTFIQSIFDFVIVALAIFSAV).

Belongs to the MscL family. In terms of assembly, homopentamer.

The protein resides in the cell inner membrane. Its function is as follows. Channel that opens in response to stretch forces in the membrane lipid bilayer. May participate in the regulation of osmotic pressure changes within the cell. This is Large-conductance mechanosensitive channel from Yersinia pseudotuberculosis serotype O:1b (strain IP 31758).